The chain runs to 398 residues: Nonsense-mediated decay protein 4 (398 aa).

Positions 327–355 are disordered; the sequence is PVTSNYRGKNNRGRNNRGRRGNKRRERER. Over residues 335–350 the composition is skewed to basic residues; it reads KNNRGRNNRGRRGNKR.

The protein localises to the cytoplasm. Involved in nonsense-mediated decay of mRNAs containing premature stop codons. The protein is Nonsense-mediated decay protein 4 (NMD4) of Candida albicans (strain SC5314 / ATCC MYA-2876) (Yeast).